A 60-amino-acid chain; its full sequence is MICHNQQSSQPPTIKTCSEGQCYKKTWRDHRGTISERGCGCPTVKPGIHISCCASDKCNA.

Disulfide bonds link Cys3–Cys22, Cys17–Cys39, Cys41–Cys52, and Cys53–Cys58.

Belongs to the three-finger toxin family. Short-chain subfamily. Type I alpha-neurotoxin sub-subfamily. Expressed by the venom gland.

It localises to the secreted. In terms of biological role, binds to muscle nicotinic acetylcholine receptor (nAChR) and inhibit acetylcholine from binding to the receptor, thereby impairing neuromuscular transmission. The protein is Three-finger toxin Mnn I of Micrurus nigrocinctus (Central American coral snake).